The sequence spans 249 residues: Pulmonary surfactant-associated protein A (249 aa).

A signal peptide spans 1–20 (MLRWPLALTFLLLAVSGLEC). The region spanning 28-100 (ASPGIPGTPG…PGERGPPGLP (73 aa)) is the Collagen-like domain. The disordered stretch occupies residues 29–102 (SPGIPGTPGS…ERGPPGLPAH (74 aa)). A 4-hydroxyproline mark is found at P30, P33, P36, P42, P54, P57, P63, and P70. Residues 42-51 (PGRDGRDGIK) are compositionally biased toward basic and acidic residues. Residues 84–93 (ERGEKGEPGE) are compositionally biased toward basic and acidic residues. A C-type lectin domain is found at 133–249 (AVGEKVFSTN…QQYRLAICEF (117 aa)). Intrachain disulfides connect C155–C247 and C225–C239. N208 is a glycosylation site (N-linked (GlcNAc...) asparagine). 4 residues coordinate Ca(2+): E216, R218, N235, and D236.

This sequence belongs to the SFTPA family. Oligomeric complex of 6 set of homotrimers.

It is found in the secreted. Its subcellular location is the extracellular space. The protein resides in the extracellular matrix. The protein localises to the surface film. In presence of calcium ions, it binds to surfactant phospholipids and contributes to lower the surface tension at the air-liquid interface in the alveoli of the mammalian lung and is essential for normal respiration. Enhances the expression of MYO18A/SP-R210 on alveolar macrophages. In Sus scrofa (Pig), this protein is Pulmonary surfactant-associated protein A (SFTPA1).